The chain runs to 364 residues: Dihydroorotate dehydrogenase (quinone) (364 aa).

FMN-binding positions include 61 to 65 (AGFDK) and Thr-85. Residue Lys-65 participates in substrate binding. 110-114 (NRMGF) provides a ligand contact to substrate. FMN is bound by residues Asn-139 and Asn-170. Asn-170 serves as a coordination point for substrate. Catalysis depends on Ser-173, which acts as the Nucleophile. Asn-175 provides a ligand contact to substrate. Residues Lys-214 and Ala-242 each contribute to the FMN site. 243 to 244 (NT) serves as a coordination point for substrate. Residues Gly-266, Gly-295, and 316-317 (YS) contribute to the FMN site.

This sequence belongs to the dihydroorotate dehydrogenase family. Type 2 subfamily. Monomer. FMN is required as a cofactor.

It is found in the cell membrane. The catalysed reaction is (S)-dihydroorotate + a quinone = orotate + a quinol. Its pathway is pyrimidine metabolism; UMP biosynthesis via de novo pathway; orotate from (S)-dihydroorotate (quinone route): step 1/1. Its function is as follows. Catalyzes the conversion of dihydroorotate to orotate with quinone as electron acceptor. The chain is Dihydroorotate dehydrogenase (quinone) from Rhodopseudomonas palustris (strain BisB5).